Reading from the N-terminus, the 66-residue chain is Large ribosomal subunit protein bL35 (66 aa).

Belongs to the bacterial ribosomal protein bL35 family.

The chain is Large ribosomal subunit protein bL35 from Cereibacter sphaeroides (strain ATCC 17029 / ATH 2.4.9) (Rhodobacter sphaeroides).